A 256-amino-acid polypeptide reads, in one-letter code: DNA repair protein RecO (256 aa).

It belongs to the RecO family.

In terms of biological role, involved in DNA repair and RecF pathway recombination. This chain is DNA repair protein RecO, found in Nocardia farcinica (strain IFM 10152).